The following is a 279-amino-acid chain: MTKADQIFKANIQKIINEGSLSEQARPKYKDGRTAHSKYITGAFAEYDLAKGEFPITTLRPIPIKSAIKELFWIYQDQSNSLDVLEAKYNVHYWNEWEVDQTRTIGQRYGAVVKKHDIISKILKQLAENPWNRRNVISLWDYEAFEETKGLLPCAFQIMFDVRRVGEDLYLDASLTQRSNDILVAHHINAMQYVALQMMFAKHFGWKIGKFFYFVNNLHIYDNQFDQAQELLKRQPVASQPKLVLNVPDGTNFFDIKPDDFELQNYDPVKPQLHFDLAI.

Residue 133–134 (RR) participates in dUMP binding. Catalysis depends on cysteine 154, which acts as the Nucleophile. DUMP-binding positions include 178–181 (RSND), asparagine 189, and 219–221 (HIY). Aspartate 181 serves as a coordination point for (6R)-5,10-methylene-5,6,7,8-tetrahydrofolate. Alanine 278 is a (6R)-5,10-methylene-5,6,7,8-tetrahydrofolate binding site.

Belongs to the thymidylate synthase family. Bacterial-type ThyA subfamily. In terms of assembly, homodimer.

It is found in the cytoplasm. The catalysed reaction is dUMP + (6R)-5,10-methylene-5,6,7,8-tetrahydrofolate = 7,8-dihydrofolate + dTMP. The protein operates within pyrimidine metabolism; dTTP biosynthesis. Functionally, catalyzes the reductive methylation of 2'-deoxyuridine-5'-monophosphate (dUMP) to 2'-deoxythymidine-5'-monophosphate (dTMP) while utilizing 5,10-methylenetetrahydrofolate (mTHF) as the methyl donor and reductant in the reaction, yielding dihydrofolate (DHF) as a by-product. This enzymatic reaction provides an intracellular de novo source of dTMP, an essential precursor for DNA biosynthesis. The sequence is that of Thymidylate synthase from Streptococcus pyogenes serotype M12 (strain MGAS2096).